The chain runs to 126 residues: Holo-[acyl-carrier-protein] synthase (126 aa).

Positions 9 and 58 each coordinate Mg(2+).

Belongs to the P-Pant transferase superfamily. AcpS family. Requires Mg(2+) as cofactor.

It localises to the cytoplasm. The catalysed reaction is apo-[ACP] + CoA = holo-[ACP] + adenosine 3',5'-bisphosphate + H(+). Its function is as follows. Transfers the 4'-phosphopantetheine moiety from coenzyme A to a Ser of acyl-carrier-protein. The chain is Holo-[acyl-carrier-protein] synthase from Edwardsiella ictaluri (strain 93-146).